The primary structure comprises 35 residues: UPF0387 membrane protein YohO (35 aa).

The helical transmembrane segment at 6–26 threads the bilayer; the sequence is IGVIALFLFMAFGGIGGVMLA.

Belongs to the UPF0387 family.

Its subcellular location is the cell inner membrane. This Escherichia coli O8 (strain IAI1) protein is UPF0387 membrane protein YohO.